The sequence spans 204 residues: phospholipase A2 inhibitor and Ly6/PLAUR domain-containing protein (204 aa).

The N-terminal stretch at 1 to 26 (MRLSRRPETFLLAFVLLCTLLGLGCP) is a signal peptide. The region spanning 27–117 (LHCEICTAAG…NSAFLSVPLT (91 aa)) is the UPAR/Ly6 domain. Disulfide bonds link Cys-29–Cys-53, Cys-32–Cys-39, Cys-46–Cys-74, Cys-80–Cys-101, Cys-102–Cys-107, Cys-126–Cys-151, and Cys-144–Cys-172.

Belongs to the CNF-like-inhibitor family.

The protein resides in the secreted. This chain is phospholipase A2 inhibitor and Ly6/PLAUR domain-containing protein (PINLYP), found in Homo sapiens (Human).